We begin with the raw amino-acid sequence, 218 residues long: Riboflavin kinase (218 aa).

Residues 1-27 are disordered; that stretch reads MRPDGPRDPVAGPDSGPEPPYPVRLSG. Residues threonine 44 and asparagine 46 each contribute to the Mg(2+) site. Residue glutamate 120 is the Nucleophile of the active site.

The protein belongs to the flavokinase family. Zn(2+) is required as a cofactor. Requires Mg(2+) as cofactor.

It carries out the reaction riboflavin + ATP = FMN + ADP + H(+). The protein operates within cofactor biosynthesis; FMN biosynthesis; FMN from riboflavin (ATP route): step 1/1. In terms of biological role, catalyzes the phosphorylation of riboflavin (vitamin B2) to form flavin mononucleotide (FMN) coenzyme. The sequence is that of Riboflavin kinase (fmn1) from Neosartorya fischeri (strain ATCC 1020 / DSM 3700 / CBS 544.65 / FGSC A1164 / JCM 1740 / NRRL 181 / WB 181) (Aspergillus fischerianus).